The following is a 197-amino-acid chain: Phospholipid hydroperoxide glutathione peroxidase (197 aa).

Phosphoserine is present on Ser-40. Residue Sec-73 is part of the active site. A non-standard amino acid (selenocysteine) is located at residue Sec-73.

This sequence belongs to the glutathione peroxidase family. In terms of assembly, monomer. Has a tendency to form higher mass oligomers. Interacts with FUNDC1; this interaction promotes GPX4 recruitment into mitochondria through TOM/TIM complex where it is degraded by mitophagy.

Its subcellular location is the mitochondrion. It localises to the cytoplasm. The catalysed reaction is a hydroperoxy polyunsaturated fatty acid + 2 glutathione = a hydroxy polyunsaturated fatty acid + glutathione disulfide + H2O. It catalyses the reaction (12S)-hydroperoxy-(5Z,8Z,10E,14Z)-eicosatetraenoate + 2 glutathione = (12S)-hydroxy-(5Z,8Z,10E,14Z)-eicosatetraenoate + glutathione disulfide + H2O. The enzyme catalyses (13S)-hydroperoxy-(9Z,11E)-octadecadienoate + 2 glutathione = (13S)-hydroxy-(9Z,11E)-octadecadienoate + glutathione disulfide + H2O. Functionally, essential antioxidant peroxidase that directly reduces phospholipid hydroperoxide even if they are incorporated in membranes and lipoproteins. Can also reduce fatty acid hydroperoxide, cholesterol hydroperoxide and thymine hydroperoxide. Plays a key role in protecting cells from oxidative damage by preventing membrane lipid peroxidation. Required to prevent cells from ferroptosis, a non-apoptotic cell death resulting from an iron-dependent accumulation of lipid reactive oxygen species. The presence of selenocysteine (Sec) versus Cys at the active site is essential for life: it provides resistance to overoxidation and prevents cells against ferroptosis. The presence of Sec at the active site is also essential for the survival of a specific type of parvalbumin-positive interneurons, thereby preventing against fatal epileptic seizures. May be required to protect cells from the toxicity of ingested lipid hydroperoxides. Required for normal sperm development and male fertility. Essential for maturation and survival of photoreceptor cells. Plays a role in a primary T-cell response to viral and parasitic infection by protecting T-cells from ferroptosis and by supporting T-cell expansion. Plays a role of glutathione peroxidase in platelets in the arachidonic acid metabolism. Reduces hydroperoxy ester lipids formed by a 15-lipoxygenase that may play a role as down-regulator of the cellular 15-lipoxygenase pathway. The protein is Phospholipid hydroperoxide glutathione peroxidase of Sapajus apella (Brown-capped capuchin).